We begin with the raw amino-acid sequence, 381 residues long: S-adenosylmethionine synthase (381 aa).

An ATP-binding site is contributed by His15. Position 17 (Asp17) interacts with Mg(2+). Glu43 lines the K(+) pocket. Positions 56 and 99 each coordinate L-methionine. Residues Gln99 to Arg109 are flexible loop. ATP is bound by residues Asp164–Lys166, Arg230–Phe231, Asp239, Arg245–Lys246, Ala262, and Lys266. Residue Asp239 coordinates L-methionine. L-methionine is bound at residue Lys270.

Belongs to the AdoMet synthase family. As to quaternary structure, homotetramer; dimer of dimers. The cofactor is Mg(2+). It depends on K(+) as a cofactor.

The protein localises to the cytoplasm. It catalyses the reaction L-methionine + ATP + H2O = S-adenosyl-L-methionine + phosphate + diphosphate. It functions in the pathway amino-acid biosynthesis; S-adenosyl-L-methionine biosynthesis; S-adenosyl-L-methionine from L-methionine: step 1/1. In terms of biological role, catalyzes the formation of S-adenosylmethionine (AdoMet) from methionine and ATP. The overall synthetic reaction is composed of two sequential steps, AdoMet formation and the subsequent tripolyphosphate hydrolysis which occurs prior to release of AdoMet from the enzyme. This Alteromonas mediterranea (strain DSM 17117 / CIP 110805 / LMG 28347 / Deep ecotype) protein is S-adenosylmethionine synthase.